The sequence spans 337 residues: 2-ketoarginine methyltransferase (337 aa).

Belongs to the 2-ketoarginine methyltransferase family.

The enzyme catalyses 5-guanidino-2-oxopentanoate + S-adenosyl-L-methionine = (3R)-5-guanidino-3-methyl-2-oxopentanoate + S-adenosyl-L-homocysteine + H(+). It participates in antibiotic biosynthesis. Its function is as follows. S-adenosyl-L-methionine-dependent methyltransferase involved in the formation of the rare amino acid 3-methylarginine (MeArg), which is incorporated into the peptidyl nucleoside antibiotic arginomycin. Transfers the methyl group from S-adenosyl-L-methionine into 5-guanidino-2-oxopentanoate acid to yield 5-guanidino-3-methyl-2-oxopentanoate, a precursor of MeArg. This chain is 2-ketoarginine methyltransferase, found in Streptomyces arginensis.